We begin with the raw amino-acid sequence, 640 residues long: RecBCD enzyme subunit RecD (640 aa).

Residue 194–201 (GGPGTGKT) participates in ATP binding.

This sequence belongs to the RecD family. Heterotrimer of RecB, RecC and RecD. All subunits contribute to DNA-binding.

The catalysed reaction is Couples ATP hydrolysis with the unwinding of duplex DNA at the replication fork by translocating in the 5'-3' direction. This creates two antiparallel DNA single strands (ssDNA). The leading ssDNA polymer is the template for DNA polymerase III holoenzyme which synthesizes a continuous strand.. It catalyses the reaction ATP + H2O = ADP + phosphate + H(+). In terms of biological role, a helicase/nuclease that prepares dsDNA breaks (DSB) for recombinational DNA repair. Binds to DSBs and unwinds DNA via a highly rapid and processive ATP-dependent bidirectional helicase activity. Unwinds dsDNA until it encounters a Chi (crossover hotspot instigator) sequence from the 3' direction. Cuts ssDNA a few nucleotides 3' to the Chi site. The properties and activities of the enzyme are changed at Chi. The Chi-altered holoenzyme produces a long 3'-ssDNA overhang and facilitates RecA-binding to the ssDNA for homologous DNA recombination and repair. Holoenzyme degrades any linearized DNA that is unable to undergo homologous recombination. In the holoenzyme this subunit has ssDNA-dependent ATPase and 5'-3' helicase activity. When added to pre-assembled RecBC greatly stimulates nuclease activity and augments holoenzyme processivity. Negatively regulates the RecA-loading ability of RecBCD. In Haemophilus influenzae (strain ATCC 51907 / DSM 11121 / KW20 / Rd), this protein is RecBCD enzyme subunit RecD.